Consider the following 935-residue polypeptide: C-1-tetrahydrofolate synthase, cytoplasmic (935 aa).

Met-1 carries the post-translational modification N-acetylmethionine. A methylenetetrahydrofolate dehydrogenase and methenyltetrahydrofolate cyclohydrolase (D/C) domain region spans residues 2–291 (APAEILNGKE…MLMQSTVESA (290 aa)). Substrate-binding positions include 52–56 (YINVK) and 99–101 (VQL). Residue Lys-56 is part of the active site. NADP(+)-binding positions include 172-174 (GRS) and Ser-197. 272-276 (PGGVG) lines the substrate pocket. The segment at 310-935 (LNLKTPVPSD…PETEQVNGLF (626 aa)) is formyltetrahydrofolate synthetase domain. A Phosphoserine modification is found at Ser-318. Residue 380–387 (TPLGEGKS) participates in ATP binding. 2 positions are modified to phosphoserine: Ser-413 and Ser-490.

The protein in the N-terminal section; belongs to the tetrahydrofolate dehydrogenase/cyclohydrolase family. This sequence in the C-terminal section; belongs to the formate--tetrahydrofolate ligase family. Homodimer. Ubiquitous.

It localises to the cytoplasm. It carries out the reaction (6R)-5,10-methylene-5,6,7,8-tetrahydrofolate + NADP(+) = (6R)-5,10-methenyltetrahydrofolate + NADPH. The catalysed reaction is (6R)-5,10-methenyltetrahydrofolate + H2O = (6R)-10-formyltetrahydrofolate + H(+). It catalyses the reaction (6S)-5,6,7,8-tetrahydrofolate + formate + ATP = (6R)-10-formyltetrahydrofolate + ADP + phosphate. The protein operates within one-carbon metabolism; tetrahydrofolate interconversion. Its function is as follows. Trifunctional enzyme that catalyzes the interconversion of three forms of one-carbon-substituted tetrahydrofolate: (6R)-5,10-methylene-5,6,7,8-tetrahydrofolate, 5,10-methenyltetrahydrofolate and (6S)-10-formyltetrahydrofolate. These derivatives of tetrahydrofolate are differentially required in nucleotide and amino acid biosynthesis, (6S)-10-formyltetrahydrofolate being required for purine biosynthesis while (6R)-5,10-methylene-5,6,7,8-tetrahydrofolate is used for serine and methionine biosynthesis for instance. This is C-1-tetrahydrofolate synthase, cytoplasmic (MTHFD1) from Homo sapiens (Human).